The following is a 204-amino-acid chain: Dephospho-CoA kinase (204 aa).

The DPCK domain maps to 3-204; the sequence is VIGLTGGIGS…DRLDLAYRAH (202 aa). 11–16 provides a ligand contact to ATP; sequence GSGKSY.

Belongs to the CoaE family.

It is found in the cytoplasm. The catalysed reaction is 3'-dephospho-CoA + ATP = ADP + CoA + H(+). The protein operates within cofactor biosynthesis; coenzyme A biosynthesis; CoA from (R)-pantothenate: step 5/5. Its function is as follows. Catalyzes the phosphorylation of the 3'-hydroxyl group of dephosphocoenzyme A to form coenzyme A. This is Dephospho-CoA kinase from Ralstonia nicotianae (strain ATCC BAA-1114 / GMI1000) (Ralstonia solanacearum).